Here is a 325-residue protein sequence, read N- to C-terminus: MTITANKRHYLEKVSHQGIISALAFDQRGALKQMMAAHQEGEATVTQIETLKVLVSEELTPYASSILLDPEYGLLATKVKANQTGLLLVYEKTGYDATTTSRLPDCLVEWSVKRLKAAGADAIKFLLYYDVDGDEQINLQKQAYIERIGSECTAEDIPFFLELLSYDERISDNNSAAYAKLKPHKVNGAMSVFSDKRFGVDVLKVEVPVNMAYVEGFTEGEVHYSQAEAIKAFQDQEAASHLPYIYLSAGVSAKLFQETLYFAAAAGAQFSGVLCGRATWAGSVPVYITKGEDEARKWLCTEGFQNIDELNRVLEETASPWTEKI.

The protein belongs to the aldolase LacD family.

The catalysed reaction is D-tagatofuranose 1,6-bisphosphate = D-glyceraldehyde 3-phosphate + dihydroxyacetone phosphate. It functions in the pathway carbohydrate metabolism; D-tagatose 6-phosphate degradation; D-glyceraldehyde 3-phosphate and glycerone phosphate from D-tagatose 6-phosphate: step 2/2. This Streptococcus pyogenes serotype M3 (strain ATCC BAA-595 / MGAS315) protein is Tagatose 1,6-diphosphate aldolase 1 (lacD1).